We begin with the raw amino-acid sequence, 351 residues long: MIILFVDFDYFFAQVEEVLNPQYKGKPLIVCVYSGRNEKSGAVATANYEARKLGVKAGMPISRAMELAPNAIFVPMHKEVYTEVSNRIMSIISSYSDKIEIASIDEAYIDITSKVKNFEEAIELGKKLKREIMEKEKITVTVGIAPNKVFAKIIADRVKPNGLGVVKPEEIEEFIKSIDIDEVPGVGNVISERLHSLGVNKLIDILSVSFDKLKEEIGEAKAFYLYRLATNSYFEPVLNKERVPHGRYLTLPKNTRDIKVIELYLKKAIDEAYNKIEGIPKRMTVVTIMQDLDIVSKSKTFKTGISKERAYTESIELLKQILQKDSRLVRRVGVRFDNIYKSKGLDVFFNS.

The UmuC domain maps to 3 to 187 (ILFVDFDYFF…IDIDEVPGVG (185 aa)). Positions 7 and 105 each coordinate Mg(2+). Glu106 is an active-site residue.

The protein belongs to the DNA polymerase type-Y family. It depends on Mg(2+) as a cofactor.

The enzyme catalyses DNA(n) + a 2'-deoxyribonucleoside 5'-triphosphate = DNA(n+1) + diphosphate. Functionally, poorly processive, error-prone DNA polymerase involved in untargeted mutagenesis. Copies undamaged DNA at stalled replication forks, which arise in vivo from mismatched or misaligned primer ends. These misaligned primers can be extended by PolIV. Exhibits no 3'-5' exonuclease (proofreading) activity. May be involved in translesional synthesis. The protein is DNA polymerase IV of Sulfurisphaera tokodaii (strain DSM 16993 / JCM 10545 / NBRC 100140 / 7) (Sulfolobus tokodaii).